The sequence spans 401 residues: Enolase (401 aa).

(2R)-2-phosphoglycerate is bound at residue glutamine 154. Residue glutamate 196 is the Proton donor of the active site. Mg(2+) is bound by residues aspartate 232, glutamate 275, and aspartate 302. (2R)-2-phosphoglycerate-binding residues include lysine 327, arginine 356, serine 357, and lysine 378. Lysine 327 (proton acceptor) is an active-site residue.

It belongs to the enolase family. Mg(2+) serves as cofactor.

The protein resides in the cytoplasm. It is found in the secreted. It localises to the cell surface. It carries out the reaction (2R)-2-phosphoglycerate = phosphoenolpyruvate + H2O. Its pathway is carbohydrate degradation; glycolysis; pyruvate from D-glyceraldehyde 3-phosphate: step 4/5. Catalyzes the reversible conversion of 2-phosphoglycerate (2-PG) into phosphoenolpyruvate (PEP). It is essential for the degradation of carbohydrates via glycolysis. This chain is Enolase, found in Haloarcula marismortui (strain ATCC 43049 / DSM 3752 / JCM 8966 / VKM B-1809) (Halobacterium marismortui).